The primary structure comprises 526 residues: Protein spinster homolog 1 (526 aa).

The interval 1–44 is disordered; the sequence is MTSRRSHGDVTPFLTQADNTEEEGVRDPESQSSDEEEEEGKDHG. Transmembrane regions (helical) follow at residues 59–79, 98–118, 126–146, 159–179, 187–207, 218–238, 272–292, 321–341, 355–375, 384–404, 419–439, and 463–483; these read VIIV…RFTV, GLVQ…FGYL, LIMC…SFVS, LVGV…ADLF, MLSF…IVGS, WALR…IFVA, FILS…LALW, MIFG…GVEI, LVCA…LAFA, VFIF…ADIL, LQIV…IGVI, and MICA…ALFI.

Belongs to the major facilitator superfamily. Spinster (TC 2.A.1.49) family.

It localises to the lysosome membrane. It catalyses the reaction a 1-acyl-sn-glycero-3-phosphocholine(out) + H(+)(out) = a 1-acyl-sn-glycero-3-phosphocholine(in) + H(+)(in). The enzyme catalyses a 1-acyl-sn-glycero-3-phosphoethanolamine(out) + H(+)(out) = a 1-acyl-sn-glycero-3-phosphoethanolamine(in) + H(+)(in). The catalysed reaction is a 1-O-(1Z-alkenyl)-sn-glycero-3-phosphocholine(out) + H(+)(out) = a 1-O-(1Z-alkenyl)-sn-glycero-3-phosphocholine(in) + H(+)(in). It carries out the reaction a 1-O-(1Z-alkenyl)-sn-glycero-3-phosphoethanolamine(out) + H(+)(out) = a 1-O-(1Z-alkenyl)-sn-glycero-3-phosphoethanolamine(in) + H(+)(in). Mediates the rate-limiting, proton-dependent, lysosomal efflux of lysophospholipids. Selective for zwitterionic headgroups such as lysophosphatidylcholine (LPC) and lysophosphatidylethanolamine (LPE). Essential player in lysosomal homeostasis. This chain is Protein spinster homolog 1 (spns1), found in Xenopus laevis (African clawed frog).